Here is a 63-residue protein sequence, read N- to C-terminus: Potassium channel toxin MeuTXKalpha4 (63 aa).

Positions Met-1–Gly-28 are cleaved as a signal peptide. Cystine bridges form between Cys-35/Cys-53, Cys-39/Cys-59, and Cys-43/Cys-61.

The protein belongs to the short scorpion toxin superfamily. Potassium channel inhibitor family. Expressed by the venom gland.

Its subcellular location is the secreted. In terms of biological role, may block voltage-gated potassium channels (Kv). The protein is Potassium channel toxin MeuTXKalpha4 of Mesobuthus eupeus (Lesser Asian scorpion).